The chain runs to 156 residues: Small ribosomal subunit protein uS7 (156 aa).

The protein belongs to the universal ribosomal protein uS7 family. In terms of assembly, part of the 30S ribosomal subunit. Contacts proteins S9 and S11.

One of the primary rRNA binding proteins, it binds directly to 16S rRNA where it nucleates assembly of the head domain of the 30S subunit. Is located at the subunit interface close to the decoding center, probably blocks exit of the E-site tRNA. In Prochlorococcus marinus (strain NATL2A), this protein is Small ribosomal subunit protein uS7.